The sequence spans 44 residues: Somatoliberin (44 aa).

Position 44 is a leucine amide (Leu44).

It belongs to the glucagon family.

It is found in the secreted. In terms of biological role, GRF is released by the hypothalamus and acts on the adenohypophyse to stimulate the secretion of growth hormone. This chain is Somatoliberin (GHRH), found in Ovis aries (Sheep).